The primary structure comprises 116 residues: Large ribosomal subunit protein bL19 (116 aa).

This sequence belongs to the bacterial ribosomal protein bL19 family.

In terms of biological role, this protein is located at the 30S-50S ribosomal subunit interface and may play a role in the structure and function of the aminoacyl-tRNA binding site. The protein is Large ribosomal subunit protein bL19 (rplS) of Streptomyces lividans.